A 401-amino-acid chain; its full sequence is S-adenosylmethionine synthase (401 aa).

An ATP-binding site is contributed by 135–140 (GHGSGD).

The protein belongs to the AdoMet synthase 2 family. Requires Mg(2+) as cofactor.

The catalysed reaction is L-methionine + ATP + H2O = S-adenosyl-L-methionine + phosphate + diphosphate. Its pathway is amino-acid biosynthesis; S-adenosyl-L-methionine biosynthesis; S-adenosyl-L-methionine from L-methionine: step 1/1. Catalyzes the formation of S-adenosylmethionine from methionine and ATP. The sequence is that of S-adenosylmethionine synthase (mat) from Methanothermobacter marburgensis (strain ATCC BAA-927 / DSM 2133 / JCM 14651 / NBRC 100331 / OCM 82 / Marburg) (Methanobacterium thermoautotrophicum).